The sequence spans 626 residues: L-amino-acid oxidase 4 (626 aa).

The first 18 residues, 1-18 (KSFFRSLVAASLVIVSYS), serve as a signal peptide directing secretion. A glycan (N-linked (GlcNAc...) asparagine) is linked at asparagine 54. The FAD site is built by glycine 75, glutamate 94, alanine 95, arginine 102, methionine 122, and arginine 123. Arginine 123 is an L-glutamate binding site. Residue arginine 123 coordinates L-glutamine. An L-lysine-binding site is contributed by arginine 123. Arginine 123 is an L-phenylalanine binding site. 3 N-linked (GlcNAc...) asparagine glycosylation sites follow: asparagine 164, asparagine 193, and asparagine 331. Valine 334 is an FAD binding site. Tyrosine 457 serves as a coordination point for L-glutamate. Tyrosine 457 contributes to the L-glutamine binding site. Tyrosine 457 contacts L-lysine. Residue tyrosine 457 coordinates L-phenylalanine. Glutamate 551 serves as a coordination point for FAD. Alanine 558 contributes to the L-phenylalanine binding site. FAD-binding residues include tryptophan 559 and valine 560.

Belongs to the flavin monoamine oxidase family. FIG1 subfamily. In terms of assembly, homodimer. It depends on FAD as a cofactor. Out of the 4 glycosylated residues, Asn-54 is hypermannosylated. The presence of a hypermannosylated N-glycan on Asn-54 leads to adoption of a more active conformation in the absence of acid activation.

The protein localises to the secreted. The enzyme catalyses an L-alpha-amino acid + O2 + H2O = a 2-oxocarboxylate + H2O2 + NH4(+). The catalysed reaction is L-lysine + O2 + H2O = 6-amino-2-oxohexanoate + H2O2 + NH4(+). It carries out the reaction L-glutamate + O2 + H2O = H2O2 + 2-oxoglutarate + NH4(+). It catalyses the reaction L-arginine + O2 + H2O = 5-guanidino-2-oxopentanoate + H2O2 + NH4(+). The enzyme catalyses L-leucine + O2 + H2O = 4-methyl-2-oxopentanoate + H2O2 + NH4(+). The catalysed reaction is L-asparagine + O2 + H2O = 2-oxosuccinamate + H2O2 + NH4(+). It carries out the reaction L-histidine + O2 + H2O = 3-(imidazol-5-yl)pyruvate + H2O2 + NH4(+). It catalyses the reaction L-isoleucine + O2 + H2O = (S)-3-methyl-2-oxopentanoate + H2O2 + NH4(+). The enzyme catalyses L-methionine + O2 + H2O = 4-methylsulfanyl-2-oxobutanoate + H2O2 + NH4(+). The catalysed reaction is L-phenylalanine + O2 + H2O = 3-phenylpyruvate + H2O2 + NH4(+). It carries out the reaction L-tyrosine + O2 + H2O = 3-(4-hydroxyphenyl)pyruvate + H2O2 + NH4(+). It catalyses the reaction L-glutamine + O2 + H2O = 2-oxoglutaramate + H2O2 + NH4(+). The enzyme catalyses L-alanine + O2 + H2O = pyruvate + H2O2 + NH4(+). Its activity is regulated as follows. LAAO4 is activated by exposure to acidic pH, the detergent sodium dodecyl sulfate, or freezing. In terms of biological role, catalyzes the oxidative deamination of L-amino acids with molecular oxygen to the corresponding alpha-keto acids and ammonia. L-glutamine shows the highest relative activity but LAAO4 has a broad substrate specificity, including L-amino acids with big aromatic, acidic and basic side chains. Methyl esters of these L-amino acids are also accepted, ethyl esters are converted but with lower activity, whereas D-Amino acids are not converted. No reaction is detected for small polar amino acids such as L-cysteine or L-aspartate, and very little for small, branched hydrophobic amino acids like L-valine. This chain is L-amino-acid oxidase 4, found in Hebeloma cylindrosporum.